Reading from the N-terminus, the 455-residue chain is Beta-1,4-mannosyltransferase bre-3 (455 aa).

Belongs to the glycosyltransferase 2 family.

The protein resides in the cytoplasm. It functions in the pathway protein modification; protein glycosylation. Functionally, glycosyltransferase with a proposed role in glycosphingolipid biosynthesis. Involved in susceptibility to pore-forming crystal toxins in conjunction with bre-1, bre-2 and bre-4. Involved in resistance to the nematotoxic C.cinerea galectin Cgl2. Has a role in determining brood size. The protein is Beta-1,4-mannosyltransferase bre-3 of Caenorhabditis briggsae.